A 384-amino-acid chain; its full sequence is MAFPCRRSLTAKTLACLLVGVSFLALQQWFLQAPRSPREERSPQEETPEGPTDAPAADEPPSELVPGPPCVANASANATADFEQLPARIQDFLRYRHCRHFPLLWDAPAKCAGGRGVFLLLAVKSAPEHYERRELIRRTWGQERSYGGRPVRRLFLLGTPGPEDEARAERLAELVALEAREHGDVLQWAFADTFLNLTLKHLHLLDWLAARCPHARFLLSGDDDVFVHTANVVRFLQAQPPGRHLFSGQLMEGSVPIRDSWSKYFVPPQLFPGSAYPVYCSGGGFLLSGPTARALRAAARHTPLFPIDDAYMGMCLERAGLAPSGHEGIRPFGVQLPGAQQSSFDPCMYRELLLVHRFAPYEMLLMWKALHSPALSCDRGHRVS.

At 1–12 (MAFPCRRSLTAK) the chain is on the cytoplasmic side. Residues 13-31 (TLACLLVGVSFLALQQWFL) traverse the membrane as a helical; Signal-anchor for type II membrane protein segment. The Lumenal portion of the chain corresponds to 32–384 (QAPRSPREER…LSCDRGHRVS (353 aa)). Residues 34 to 68 (PRSPREERSPQEETPEGPTDAPAADEPPSELVPGP) form a disordered region. N-linked (GlcNAc...) asparagine glycans are attached at residues N73, N77, and N196.

The protein belongs to the glycosyltransferase 31 family. Present in stomach and colon (at protein level). Restricted in the stomach, colon and small intestine, where core 3 structure is present.

It is found in the golgi apparatus membrane. The enzyme catalyses a 3-O-[N-acetyl-alpha-D-galactosaminyl]-L-threonyl-[protein] + UDP-N-acetyl-alpha-D-glucosamine = a 3-O-[N-acetyl-beta-D-glucosaminyl-(1-&gt;3)-N-acetyl-alpha-D-galactosaminyl]-L-threonyl-[protein] + UDP + H(+). It catalyses the reaction a 3-O-[N-acetyl-alpha-D-galactosaminyl]-L-seryl-[protein] + UDP-N-acetyl-alpha-D-glucosamine = 3-O-[N-acetyl-beta-D-glucosaminyl-(1-&gt;3)-N-acetyl-alpha-D-galactosaminyl]-L-seryl-[protein] + UDP + H(+). Its pathway is protein modification; protein glycosylation. In terms of biological role, beta-1,3-N-acetylglucosaminyltransferase that synthesizes the core 3 structure of the O-glycan, an important precursor in the biosynthesis of mucin-type glycoproteins. Plays an important role in the synthesis of mucin-type O-glycans in digestive organs. The chain is Acetylgalactosaminyl-O-glycosyl-glycoprotein beta-1,3-N-acetylglucosaminyltransferase (B3GNT6) from Homo sapiens (Human).